The following is a 49-amino-acid chain: Large ribosomal subunit protein uL16 (49 aa).

Belongs to the universal ribosomal protein uL16 family. As to quaternary structure, part of the 50S ribosomal subunit.

Functionally, binds 23S rRNA and is also seen to make contacts with the A and possibly P site tRNAs. This Aquifex pyrophilus protein is Large ribosomal subunit protein uL16 (rplP).